We begin with the raw amino-acid sequence, 231 residues long: Orotidine 5'-phosphate decarboxylase (231 aa).

Residues Asp-11, Lys-33, 60–69 (DLKFHDIPNT), Thr-119, Arg-180, Gln-189, Gly-209, and Arg-210 contribute to the substrate site. Residue Lys-62 is the Proton donor of the active site.

The protein belongs to the OMP decarboxylase family. Type 1 subfamily. As to quaternary structure, homodimer.

The enzyme catalyses orotidine 5'-phosphate + H(+) = UMP + CO2. Its pathway is pyrimidine metabolism; UMP biosynthesis via de novo pathway; UMP from orotate: step 2/2. Its function is as follows. Catalyzes the decarboxylation of orotidine 5'-monophosphate (OMP) to uridine 5'-monophosphate (UMP). The polypeptide is Orotidine 5'-phosphate decarboxylase (Idiomarina loihiensis (strain ATCC BAA-735 / DSM 15497 / L2-TR)).